A 98-amino-acid chain; its full sequence is NADH-ubiquinone oxidoreductase chain 4L (98 aa).

3 consecutive transmembrane segments (helical) span residues 1 to 21 (MMSINLNLIMAFSLALAGVLI), 28 to 48 (STLLCLEGMMLSLFILMALLI), and 59 to 79 (APLVLLVFSACEAGVGLALLV).

This sequence belongs to the complex I subunit 4L family. As to quaternary structure, core subunit of respiratory chain NADH dehydrogenase (Complex I) which is composed of 45 different subunits.

The protein resides in the mitochondrion inner membrane. The enzyme catalyses a ubiquinone + NADH + 5 H(+)(in) = a ubiquinol + NAD(+) + 4 H(+)(out). Functionally, core subunit of the mitochondrial membrane respiratory chain NADH dehydrogenase (Complex I) which catalyzes electron transfer from NADH through the respiratory chain, using ubiquinone as an electron acceptor. Part of the enzyme membrane arm which is embedded in the lipid bilayer and involved in proton translocation. The polypeptide is NADH-ubiquinone oxidoreductase chain 4L (MT-ND4L) (Pseudocheirus peregrinus (Common ring-tailed possum)).